The primary structure comprises 833 residues: Coiled-coil domain-containing protein 110 (833 aa).

Positions 431–778 form a coiled coil; sequence LQNYLKESVQ…REYLNLSDKI (348 aa).

It is found in the nucleus. This Macaca fascicularis (Crab-eating macaque) protein is Coiled-coil domain-containing protein 110 (CCDC110).